Reading from the N-terminus, the 252-residue chain is Chitooligosaccharide deacetylase (252 aa).

Positions 61 and 125 each coordinate Mg(2+).

Belongs to the YdjC deacetylase family. ChbG subfamily. In terms of assembly, homodimer. Requires Mg(2+) as cofactor.

It localises to the cytoplasm. The catalysed reaction is N,N'-diacetylchitobiose + H2O = N-acetyl-beta-D-glucosaminyl-(1-&gt;4)-D-glucosamine + acetate. The enzyme catalyses diacetylchitobiose-6'-phosphate + H2O = N'-monoacetylchitobiose-6'-phosphate + acetate. Its pathway is glycan degradation; chitin degradation. In terms of biological role, involved in the degradation of chitin. ChbG is essential for growth on the acetylated chitooligosaccharides chitobiose and chitotriose but is dispensable for growth on cellobiose and chitosan dimer, the deacetylated form of chitobiose. Deacetylation of chitobiose-6-P and chitotriose-6-P is necessary for both the activation of the chb promoter by the regulatory protein ChbR and the hydrolysis of phosphorylated beta-glucosides by the phospho-beta-glucosidase ChbF. Catalyzes the removal of only one acetyl group from chitobiose-6-P to yield monoacetylchitobiose-6-P, the inducer of ChbR and the substrate of ChbF. This is Chitooligosaccharide deacetylase from Escherichia coli O6:H1 (strain CFT073 / ATCC 700928 / UPEC).